Here is a 180-residue protein sequence, read N- to C-terminus: UPF0227 protein YcfP (180 aa).

This sequence belongs to the UPF0227 family.

The protein is UPF0227 protein YcfP of Escherichia coli O7:K1 (strain IAI39 / ExPEC).